The sequence spans 269 residues: Protein UL24 (269 aa).

Positions 191–244 (IEPRTQRARRRRGGAARGSASRPKRSHSGARDPPESAARQLPPADQTPTSTEGG) are disordered.

This sequence belongs to the herpesviridae UL24 family.

It is found in the virion. The protein resides in the host cytoplasm. Its subcellular location is the host nucleus. The protein localises to the host nucleolus. It localises to the host Golgi apparatus. Functionally, may participate in nuclear egress of viral particles. Plays a role in the dispersal of several host nucleolar proteins including NCL/nucleolin and NPM1. Since deletion of host NCL/nucleolin negatively impact on nuclear egress, UL24 supposedly acts on this process through its effect on host nucleoli. This is Protein UL24 from Homo sapiens (Human).